We begin with the raw amino-acid sequence, 1229 residues long: Vacuolar protein sorting-associated protein 8 homolog (1229 aa).

Positions 67–89 are disordered; that stretch reads EFGMPVPHATPTPSIGEDSTIRT. One copy of the CHCR repeat lies at 901–1063; the sequence is ETTRLLSLHY…ILPHQELQSI (163 aa). The RING-type; atypical zinc finger occupies 1148 to 1189; sequence CSMCRQRLYDHSQVLIFGGCGHGIHEQCMEESETQFEECPRC.

Belongs to the VPS8 family. As to quaternary structure, component of the class C core vacuole/endosome tethering (CORVET) complex composed of at least Vps8, dor/Vps18, car/Vps33A and Vps16A; unlike in other species, Vps11 is not part of the Drosophila complex. Due to the reduced number of components the Drosophila CORVET complex is often referred to as the miniCORVET complex. Has a higher affinity than the homotypic fusion and vacuole protein sorting (HOPS) tethering complex-specific component lt/Vps41 for Vps16A, car/Vps33A and dor/Vps18, the core components shared by both tethering complexes.

Its subcellular location is the early endosome. Part of the class C core vacuole/endosome tethering (CORVET) complex involved in endo-lysosomal vesicle trafficking and lysosome biogenesis by facilitating docking and fusion of endosomal vesicles. The CORVET complex acts upstream of the homotypic fusion and vacuole protein sorting (HOPS) tethering complex but is not involved in autophagic flux. The CORVET complex may cooperate with the early endosomal tether Rbsn-5 to mediate endosomal fusion. As part of the CORVET complex recruited to endosomes by activated GTP-bound Rab5. Specifically required for endocytic trafficking in a subset of cells, such as hemocytes and nephrocytes, which are highly active in endocytosis. The protein is Vacuolar protein sorting-associated protein 8 homolog of Drosophila melanogaster (Fruit fly).